We begin with the raw amino-acid sequence, 467 residues long: ATP-dependent protease ATPase subunit HslU (467 aa).

Residues valine 22 and glycine 64–glutamate 69 each bind ATP. Positions glutamine 149 to glutamate 192 are disordered. The span at glutamate 178–glutamate 192 shows a compositional bias: basic and acidic residues. ATP-binding residues include aspartate 280, glutamate 345, and arginine 417.

It belongs to the ClpX chaperone family. HslU subfamily. As to quaternary structure, a double ring-shaped homohexamer of HslV is capped on each side by a ring-shaped HslU homohexamer. The assembly of the HslU/HslV complex is dependent on binding of ATP.

Its subcellular location is the cytoplasm. ATPase subunit of a proteasome-like degradation complex; this subunit has chaperone activity. The binding of ATP and its subsequent hydrolysis by HslU are essential for unfolding of protein substrates subsequently hydrolyzed by HslV. HslU recognizes the N-terminal part of its protein substrates and unfolds these before they are guided to HslV for hydrolysis. This is ATP-dependent protease ATPase subunit HslU from Staphylococcus aureus (strain MRSA252).